The following is a 185-amino-acid chain: Photosystem I assembly protein Ycf4 (185 aa).

Helical transmembrane passes span 22–42 (FFFA…GFSS), 57–77 (ILFV…LFFS), and 101–121 (FYVF…LRVP).

This sequence belongs to the Ycf4 family.

It is found in the plastid. Its subcellular location is the chloroplast thylakoid membrane. Functionally, seems to be required for the assembly of the photosystem I complex. The polypeptide is Photosystem I assembly protein Ycf4 (Gnetum parvifolium (Small-leaved jointfir)).